We begin with the raw amino-acid sequence, 254 residues long: Type III pantothenate kinase (254 aa).

6–13 (DVGNSNIV) serves as a coordination point for ATP. Residues Tyr-100 and 107 to 110 (GADR) each bind substrate. Asp-109 acts as the Proton acceptor in catalysis. Residue Asp-129 participates in K(+) binding. Residue Thr-132 participates in ATP binding. Thr-184 provides a ligand contact to substrate.

Belongs to the type III pantothenate kinase family. As to quaternary structure, homodimer. The cofactor is NH4(+). It depends on K(+) as a cofactor.

The protein resides in the cytoplasm. The catalysed reaction is (R)-pantothenate + ATP = (R)-4'-phosphopantothenate + ADP + H(+). The protein operates within cofactor biosynthesis; coenzyme A biosynthesis; CoA from (R)-pantothenate: step 1/5. Its function is as follows. Catalyzes the phosphorylation of pantothenate (Pan), the first step in CoA biosynthesis. This Pelobacter propionicus (strain DSM 2379 / NBRC 103807 / OttBd1) protein is Type III pantothenate kinase.